Consider the following 198-residue polypeptide: Ribosomal RNA small subunit methyltransferase G (198 aa).

S-adenosyl-L-methionine-binding positions include glycine 74, phenylalanine 79, 123–124 (IQ), and arginine 136.

It belongs to the methyltransferase superfamily. RNA methyltransferase RsmG family.

The protein localises to the cytoplasm. It carries out the reaction guanosine(527) in 16S rRNA + S-adenosyl-L-methionine = N(7)-methylguanosine(527) in 16S rRNA + S-adenosyl-L-homocysteine. Specifically methylates the N7 position of guanine in position 527 of 16S rRNA. The polypeptide is Ribosomal RNA small subunit methyltransferase G (Orientia tsutsugamushi (strain Ikeda) (Rickettsia tsutsugamushi)).